The following is a 288-amino-acid chain: Bifunctional protein FolD (288 aa).

NADP(+) is bound by residues 166–168, Ser-191, and Val-232; that span reads GRS.

This sequence belongs to the tetrahydrofolate dehydrogenase/cyclohydrolase family. Homodimer.

The enzyme catalyses (6R)-5,10-methylene-5,6,7,8-tetrahydrofolate + NADP(+) = (6R)-5,10-methenyltetrahydrofolate + NADPH. It catalyses the reaction (6R)-5,10-methenyltetrahydrofolate + H2O = (6R)-10-formyltetrahydrofolate + H(+). It participates in one-carbon metabolism; tetrahydrofolate interconversion. Its function is as follows. Catalyzes the oxidation of 5,10-methylenetetrahydrofolate to 5,10-methenyltetrahydrofolate and then the hydrolysis of 5,10-methenyltetrahydrofolate to 10-formyltetrahydrofolate. The protein is Bifunctional protein FolD of Roseiflexus castenholzii (strain DSM 13941 / HLO8).